A 126-amino-acid chain; its full sequence is Aspartate 1-decarboxylase (126 aa).

The active-site Schiff-base intermediate with substrate; via pyruvic acid is the S25. S25 carries the pyruvic acid (Ser) modification. T57 is a binding site for substrate. Y58 serves as the catalytic Proton donor. A substrate-binding site is contributed by 73-75 (GAA).

This sequence belongs to the PanD family. Heterooctamer of four alpha and four beta subunits. The cofactor is pyruvate. Is synthesized initially as an inactive proenzyme, which is activated by self-cleavage at a specific serine bond to produce a beta-subunit with a hydroxyl group at its C-terminus and an alpha-subunit with a pyruvoyl group at its N-terminus.

The protein localises to the cytoplasm. It catalyses the reaction L-aspartate + H(+) = beta-alanine + CO2. Its pathway is cofactor biosynthesis; (R)-pantothenate biosynthesis; beta-alanine from L-aspartate: step 1/1. Functionally, catalyzes the pyruvoyl-dependent decarboxylation of aspartate to produce beta-alanine. The protein is Aspartate 1-decarboxylase of Yersinia pseudotuberculosis serotype IB (strain PB1/+).